The primary structure comprises 320 residues: rRNA methyltransferase 2, mitochondrial (320 aa).

The N-terminal 18 residues, 1 to 18 (MILVYNRIRSIISSSLGR), are a transit peptide targeting the mitochondrion. S-adenosyl-L-methionine-binding positions include 83–86 (PGAW), aspartate 104, 178–179 (DI), and aspartate 203. Lysine 264 acts as the Proton acceptor in catalysis.

The protein belongs to the class I-like SAM-binding methyltransferase superfamily. RNA methyltransferase RlmE family.

It is found in the mitochondrion. The catalysed reaction is uridine(2791) in 21S rRNA + S-adenosyl-L-methionine = 2'-O-methyluridine(2791) in 21S rRNA + S-adenosyl-L-homocysteine + H(+). In terms of biological role, S-adenosyl-L-methionine-dependent 2'-O-ribose methyltransferase that catalyzes the formation of 2'-O-methyluridine at position 2791 (Um2791) in the 21S mitochondrial large subunit ribosomal RNA (mtLSU rRNA), a universally conserved modification in the peptidyl transferase domain of the mtLSU rRNA. The protein is rRNA methyltransferase 2, mitochondrial of Saccharomyces cerevisiae (strain ATCC 204508 / S288c) (Baker's yeast).